A 727-amino-acid chain; its full sequence is Iron-sulfur clusters transporter atm1, mitochondrial (727 aa).

Residues 46-97 (NSPLRKDASKEPALASNSKTTNPIPTQASASVNPPKDARNATTAKKDLLSET) are disordered. Residues 60-77 (ASNSKTTNPIPTQASASV) show a composition bias toward polar residues. Residues 81-94 (KDARNATTAKKDLL) show a composition bias toward basic and acidic residues. Residues 131–152 (VGTALSLLVGAKILNVEVPFYF) traverse the membrane as a helical segment. The ABC transmembrane type-1 domain maps to 131–421 (VGTALSLLVG…LGSVYRELRQ (291 aa)). Over 153–175 (KSIVDSMNIDFATVGGTAYTVAG) the chain is Mitochondrial intermembrane. The chain crosses the membrane as a helical span at residues 176 to 199 (SMIIAYGVTRIGATLFQELRNAVF). Residues 200–248 (ASVAQKAIRRVARNVFEHLLRLDLNFHLSRQTGGLTRAIDRGTKGISFL) lie on the Mitochondrial matrix side of the membrane. Residues 249–272 (LTSMVFHVVPTALEISLVCGILTY) form a helical membrane-spanning segment. A topological domain (mitochondrial intermembrane) is located at residue glutamine 273. Residues 274–294 (YGFQFAAITAATMVAYTAFTI) form a helical membrane-spanning segment. At 295–360 (TTTAWRTKFR…ASIKVTTSLA (66 aa)) the chain is on the mitochondrial matrix side. Residues 300-304 (RTKFR) and 363-366 (NSGQ) each bind glutathione. The helical transmembrane segment at 361–379 (FLNSGQNMIFSSALAAMMY) threads the bilayer. At 380-394 (LAANGVANGNLTVGD) the chain is on the mitochondrial intermembrane side. Residues 395–416 (LVMVNQLVFQLSVPLNFLGSVY) form a helical membrane-spanning segment. Glycine 413 contacts glutathione. Residues 417 to 727 (RELRQSLLDM…DMAPGPKAQQ (311 aa)) are Mitochondrial matrix-facing. The region spanning 456-692 (IRFENVTFGY…NGIYAELWNA (237 aa)) is the ABC transporter domain. Residues tyrosine 465 and 489–500 (GPSGCGKSTILR) each bind ATP. Positions 702–719 (EFERETERDDVESKERDM) are enriched in basic and acidic residues. Residues 702-727 (EFERETERDDVESKERDMAPGPKAQQ) form a disordered region.

This sequence belongs to the ABC transporter superfamily. ABCB family. Heavy Metal importer (TC 3.A.1.210) subfamily. In terms of assembly, homodimer.

It is found in the mitochondrion inner membrane. Performs an essential function in the generation of cytoplasmic iron-sulfur proteins by mediating the ATP-dependent export of Fe/S cluster precursors synthesized by nfs1 and other mitochondrial proteins. Hydrolyzes ATP. Binds glutathione and may function by transporting a glutathione-conjugated iron-sulfur compound. The sequence is that of Iron-sulfur clusters transporter atm1, mitochondrial from Aspergillus fumigatus (strain ATCC MYA-4609 / CBS 101355 / FGSC A1100 / Af293) (Neosartorya fumigata).